The primary structure comprises 146 residues: Hemoglobin subunit beta (146 aa).

Residues 2-146 (QWTAEEKQLI…VAHALARKYH (145 aa)) enclose the Globin domain. Heme b-binding residues include His63 and His92.

It belongs to the globin family. Heterotetramer of two alpha chains and two beta chains. In terms of tissue distribution, red blood cells.

In terms of biological role, involved in oxygen transport from the lung to the various peripheral tissues. In Apus apus (Common swift), this protein is Hemoglobin subunit beta (HBB).